An 876-amino-acid polypeptide reads, in one-letter code: Alanine--tRNA ligase (876 aa).

The Zn(2+) site is built by H565, H569, C667, and H671.

Belongs to the class-II aminoacyl-tRNA synthetase family. Requires Zn(2+) as cofactor.

It is found in the cytoplasm. It catalyses the reaction tRNA(Ala) + L-alanine + ATP = L-alanyl-tRNA(Ala) + AMP + diphosphate. In terms of biological role, catalyzes the attachment of alanine to tRNA(Ala) in a two-step reaction: alanine is first activated by ATP to form Ala-AMP and then transferred to the acceptor end of tRNA(Ala). Also edits incorrectly charged Ser-tRNA(Ala) and Gly-tRNA(Ala) via its editing domain. In Staphylococcus epidermidis (strain ATCC 35984 / DSM 28319 / BCRC 17069 / CCUG 31568 / BM 3577 / RP62A), this protein is Alanine--tRNA ligase.